Reading from the N-terminus, the 645-residue chain is Sodium/hydrogen exchanger 9 (645 aa).

The Lumenal segment spans residues 1–20; the sequence is MERQSRVMSEKDEYQFQHQG. A helical transmembrane segment spans residues 21-41; sequence AVELLVFNFLLILTILTIWLF. The Cytoplasmic portion of the chain corresponds to 42 to 45; sequence KNHR. A helical transmembrane segment spans residues 46–66; sequence FRFLHETGGAMVYGLIMGLIL. The Lumenal segment spans residues 67–126; the sequence is RYATAPTDIESGTVYDCVKLTFSPSTLLVNITDQVYEYKYKREISQHNINPHQGNAILEK. Residue Asn-96 is glycosylated (N-linked (GlcNAc...) asparagine). The helical transmembrane segment at 127–147 threads the bilayer; the sequence is MTFDPEIFFNVLLPPIIFHAG. Topologically, residues 148–164 are cytoplasmic; the sequence is YSLKKRHFFQNLGSILT. The helical transmembrane segment at 165 to 185 threads the bilayer; sequence YAFLGTAISCIVIGLIMYGFV. Residues 186 to 203 lie on the Lumenal side of the membrane; that stretch reads KAMIHAGQLKNGDFHFTD. A helical membrane pass occupies residues 204–224; that stretch reads CLFFGSLMSATDPVTVLAIFH. Over 225–235 the chain is Cytoplasmic; sequence ELHVDPDLYTL. The helical transmembrane segment at 236–256 threads the bilayer; that stretch reads LFGESVLNDAVAIVLTYSISI. At 257–277 the chain is on the lumenal side; the sequence is YSPKENPNAFDAAAFFQSVGN. The chain crosses the membrane as a helical span at residues 278–298; sequence FLGIFAGSFAMGSAYAIITAL. Residues 299–301 are Cytoplasmic-facing; sequence LTK. Transmembrane regions (helical) follow at residues 302-322 and 323-343; these read FTKL…LSWS and AFLS…FCGV. At 344–364 the chain is on the cytoplasmic side; sequence TQAHYTYNNLSSDSKIRTKQL. The helical transmembrane segment at 365 to 385 threads the bilayer; it reads FEFMNFLAENVIFCYMGLALF. Position 386 (Thr-386) is a topological domain, lumenal. A helical membrane pass occupies residues 387–407; the sequence is FQNHIFNALFILGAFLAIFVA. Residues 408–429 lie on the Cytoplasmic side of the membrane; the sequence is RACNIYPLSFLLNLGRKQKIPW. The helical transmembrane segment at 430–450 threads the bilayer; it reads NFQHMMMFSGLRGAIAFALAI. Residues 451 to 465 are Lumenal-facing; the sequence is RNTESQPKQMMFTTT. A helical transmembrane segment spans residues 466–486; sequence LLLVFFTVWVFGGGTTPMLTW. The Cytoplasmic segment spans residues 487–645; it reads LQIRVGVDLD…EQTLGQSQLN (159 aa). The segment at 594-622 is disordered; sequence QASSPCSPPARLGLDQKASPQTPGKENIY.

Belongs to the monovalent cation:proton antiporter 1 (CPA1) transporter (TC 2.A.36) family. Homodimer; phosphatidylinositol-4,5-bisphosphate (PIP2) and phosphatidylinositol 3,4,5-trisphosphate (PIP3) could be involved in the dimer stabilization. Interacts (via the C-terminus) with RACK1. Interacts with CHP1. As to expression, ubiquitously expressed in all tissues tested. Expressed at highest levels in heart and skeletal muscle, followed by placenta, kidney, and liver. Expressed in the brain, in the medulla and spinal cord.

Its subcellular location is the late endosome membrane. The protein localises to the early endosome membrane. It localises to the recycling endosome membrane. The protein resides in the cell membrane. It is found in the cytoplasmic vesicle. Its subcellular location is the phagosome membrane. It carries out the reaction Na(+)(in) + H(+)(out) = Na(+)(out) + H(+)(in). The enzyme catalyses K(+)(in) + H(+)(out) = K(+)(out) + H(+)(in). Its function is as follows. Endosomal Na(+), K(+)/H(+) antiporter. Mediates the electroneutral exchange of endosomal luminal H(+) for a cytosolic Na(+) or K(+). By facilitating proton efflux, SLC9A9 counteracts the acidity generated by vacuolar (V)-ATPase, thereby limiting luminal acidification. Regulates organellar pH and consequently, e.g., endosome maturation and endocytic trafficking of plasma membrane receptors and neurotransporters. Promotes the recycling of transferrin receptors back to the cell surface to facilitate additional iron uptake in the brain. Regulates synaptic transmission by regulating the luminal pH of axonal endosomes. Regulates phagosome lumenal pH, thus affecting phagosome maturation, and consequently, microbicidal activity in macrophages. Can also be active at the cell surface of specialized cells, e.g., in the inner ear hair bundles uses the high K(+) of the endolymph to regulate intracelular pH. The protein is Sodium/hydrogen exchanger 9 of Homo sapiens (Human).